We begin with the raw amino-acid sequence, 181 residues long: Large ribosomal subunit protein uL5 (181 aa).

This sequence belongs to the universal ribosomal protein uL5 family. As to quaternary structure, part of the 50S ribosomal subunit; part of the 5S rRNA/L5/L18/L25 subcomplex. Contacts the 5S rRNA and the P site tRNA. Forms a bridge to the 30S subunit in the 70S ribosome.

In terms of biological role, this is one of the proteins that bind and probably mediate the attachment of the 5S RNA into the large ribosomal subunit, where it forms part of the central protuberance. In the 70S ribosome it contacts protein S13 of the 30S subunit (bridge B1b), connecting the 2 subunits; this bridge is implicated in subunit movement. Contacts the P site tRNA; the 5S rRNA and some of its associated proteins might help stabilize positioning of ribosome-bound tRNAs. The protein is Large ribosomal subunit protein uL5 of Thermosipho africanus (strain TCF52B).